The following is a 719-amino-acid chain: Protein psiJ (719 aa).

The N-terminal stretch at 1–21 is a signal peptide; it reads MVSNLLKGLILFSLFISFLNG. Topologically, residues 22 to 653 are extracellular; it reads DDKIFPVTIR…RCQSVAVKAG (632 aa). 10 N-linked (GlcNAc...) asparagine glycosylation sites follow: N46, N59, N86, N113, N301, N372, N435, N457, N562, and N628. One can recognise a PA14 domain in the interval 112 to 260; the sequence is QNQTDPRVFY…KDYCGVCEGT (149 aa). The chain crosses the membrane as a helical span at residues 654–674; it reads VIGGAAIAGVVVGGAVALGLA. The Cytoplasmic segment spans residues 675 to 719; it reads LFGAKAGYNHWMSLKNNQMATSSVNPLYEPSPHQGTNPLWEAPPT.

Belongs to the prespore-cell-inducing factor family.

The protein resides in the membrane. The polypeptide is Protein psiJ (psiJ) (Dictyostelium discoideum (Social amoeba)).